The chain runs to 434 residues: Serine hydroxymethyltransferase (434 aa).

(6S)-5,6,7,8-tetrahydrofolate-binding positions include Leu-133 and 137–139; that span reads GHL. Lys-242 bears the N6-(pyridoxal phosphate)lysine mark.

It belongs to the SHMT family. As to quaternary structure, homodimer. Pyridoxal 5'-phosphate serves as cofactor.

It localises to the cytoplasm. It catalyses the reaction (6R)-5,10-methylene-5,6,7,8-tetrahydrofolate + glycine + H2O = (6S)-5,6,7,8-tetrahydrofolate + L-serine. It functions in the pathway one-carbon metabolism; tetrahydrofolate interconversion. Its pathway is amino-acid biosynthesis; glycine biosynthesis; glycine from L-serine: step 1/1. In terms of biological role, catalyzes the reversible interconversion of serine and glycine with tetrahydrofolate (THF) serving as the one-carbon carrier. This reaction serves as the major source of one-carbon groups required for the biosynthesis of purines, thymidylate, methionine, and other important biomolecules. Also exhibits THF-independent aldolase activity toward beta-hydroxyamino acids, producing glycine and aldehydes, via a retro-aldol mechanism. The sequence is that of Serine hydroxymethyltransferase from Methylorubrum populi (strain ATCC BAA-705 / NCIMB 13946 / BJ001) (Methylobacterium populi).